Reading from the N-terminus, the 335-residue chain is 5-dehydro-2-deoxygluconokinase (335 aa).

Belongs to the carbohydrate kinase PfkB family.

The catalysed reaction is 5-dehydro-2-deoxy-D-gluconate + ATP = 6-phospho-5-dehydro-2-deoxy-D-gluconate + ADP + H(+). Its pathway is polyol metabolism; myo-inositol degradation into acetyl-CoA; acetyl-CoA from myo-inositol: step 5/7. In terms of biological role, catalyzes the phosphorylation of 5-dehydro-2-deoxy-D-gluconate (2-deoxy-5-keto-D-gluconate or DKG) to 6-phospho-5-dehydro-2-deoxy-D-gluconate (DKGP). The chain is 5-dehydro-2-deoxygluconokinase from Geobacillus kaustophilus (strain HTA426).